The following is a 430-amino-acid chain: Gamma-glutamyl phosphate reductase (430 aa).

Belongs to the gamma-glutamyl phosphate reductase family.

The protein resides in the cytoplasm. The catalysed reaction is L-glutamate 5-semialdehyde + phosphate + NADP(+) = L-glutamyl 5-phosphate + NADPH + H(+). It participates in amino-acid biosynthesis; L-proline biosynthesis; L-glutamate 5-semialdehyde from L-glutamate: step 2/2. Functionally, catalyzes the NADPH-dependent reduction of L-glutamate 5-phosphate into L-glutamate 5-semialdehyde and phosphate. The product spontaneously undergoes cyclization to form 1-pyrroline-5-carboxylate. This is Gamma-glutamyl phosphate reductase from Methylococcus capsulatus (strain ATCC 33009 / NCIMB 11132 / Bath).